Consider the following 365-residue polypeptide: UDP-N-acetylglucosamine--N-acetylmuramyl-(pentapeptide) pyrophosphoryl-undecaprenol N-acetylglucosamine transferase (365 aa).

Residues 20–22 (TGG), N132, R168, S196, I253, and Q298 contribute to the UDP-N-acetyl-alpha-D-glucosamine site.

This sequence belongs to the glycosyltransferase 28 family. MurG subfamily.

Its subcellular location is the cell inner membrane. The enzyme catalyses di-trans,octa-cis-undecaprenyl diphospho-N-acetyl-alpha-D-muramoyl-L-alanyl-D-glutamyl-meso-2,6-diaminopimeloyl-D-alanyl-D-alanine + UDP-N-acetyl-alpha-D-glucosamine = di-trans,octa-cis-undecaprenyl diphospho-[N-acetyl-alpha-D-glucosaminyl-(1-&gt;4)]-N-acetyl-alpha-D-muramoyl-L-alanyl-D-glutamyl-meso-2,6-diaminopimeloyl-D-alanyl-D-alanine + UDP + H(+). It functions in the pathway cell wall biogenesis; peptidoglycan biosynthesis. Functionally, cell wall formation. Catalyzes the transfer of a GlcNAc subunit on undecaprenyl-pyrophosphoryl-MurNAc-pentapeptide (lipid intermediate I) to form undecaprenyl-pyrophosphoryl-MurNAc-(pentapeptide)GlcNAc (lipid intermediate II). In Ralstonia nicotianae (strain ATCC BAA-1114 / GMI1000) (Ralstonia solanacearum), this protein is UDP-N-acetylglucosamine--N-acetylmuramyl-(pentapeptide) pyrophosphoryl-undecaprenol N-acetylglucosamine transferase.